A 329-amino-acid polypeptide reads, in one-letter code: Neuropeptides B/W receptor type 1 (329 aa).

At 1 to 39 (MHNLSLFEPGRGNVSCGGPFLGCPNESNPAPLPLPQPLA) the chain is on the extracellular side. N-linked (GlcNAc...) asparagine glycans are attached at residues N3, N13, and N25. The helical transmembrane segment at 40–63 (VAVPVVYGVICAVGLAGNSAVLYV) threads the bilayer. Over 64–74 (LLRTPRMKTVT) the chain is Cytoplasmic. A helical membrane pass occupies residues 75-99 (NVFILNLAIADELFTLVLPINIADF). Residues 100–114 (LLRRWPFGEVMCKLI) lie on the Extracellular side of the membrane. Residues C111 and C190 are joined by a disulfide bond. A helical transmembrane segment spans residues 115-134 (VAVDQYNTFSSLYFLAVMSA). The Cytoplasmic segment spans residues 135 to 159 (DRYLVVLATAESRRVSGRTYGAARA). Residues 160–179 (VSLAVWALVTLVVLPFAVFA) traverse the membrane as a helical segment. Residues 180-204 (RLDEEQGRRQCVLVFPQPEAFWWRA) are Extracellular-facing. Residues 205–226 (SRLYTLVLGFAIPVSTICALYI) form a helical membrane-spanning segment. Residues 227–250 (TLLCRLRAIQLDSHAKALDRAKKR) are Cytoplasmic-facing. Residues 251 to 275 (VTLLVVAILAVCLLCWTPYHLSTIV) form a helical membrane-spanning segment. Over 276–285 (ALTTDLPQTP) the chain is Extracellular. A helical transmembrane segment spans residues 286 to 300 (LVIGISYFITSLSYA). Residues 301 to 329 (NSCLNPFLYAFLDDSFRRSLRQLVSCRTA) are Cytoplasmic-facing.

The protein belongs to the G-protein coupled receptor 1 family.

The protein resides in the cell membrane. Interacts specifically with a number of opioid ligands. Receptor for neuropeptides B and W, which may be involved in neuroendocrine system regulation, food intake and the organization of other signals. The polypeptide is Neuropeptides B/W receptor type 1 (Npbwr1) (Rattus norvegicus (Rat)).